The primary structure comprises 172 residues: MORN repeat-containing protein 5 (172 aa).

3 MORN repeats span residues 8–30 (YIGE…TETK), 31–53 (YIGE…NGSR), and 54–75 (FDAV…DGLQ).

It localises to the cell projection. Its subcellular location is the cilium. The protein localises to the flagellum. The polypeptide is MORN repeat-containing protein 5 (MORN5) (Bos taurus (Bovine)).